Reading from the N-terminus, the 350-residue chain is NADH-cytochrome b5 reductase 2 (350 aa).

Residues 43–63 (PLVLALGGVAGIGAWYGLGGF) form a helical membrane-spanning segment. The FAD-binding FR-type domain occupies 96 to 204 (DQFVEFTLKE…KGPIAKFAYK (109 aa)). FAD is bound at residue 207–242 (EFESIGMIAGGSGITPMYQVIQDIASNPSDKTKVTL).

It belongs to the flavoprotein pyridine nucleotide cytochrome reductase family. The cofactor is FAD.

It localises to the mitochondrion outer membrane. The enzyme catalyses 2 Fe(III)-[cytochrome b5] + NADH = 2 Fe(II)-[cytochrome b5] + NAD(+) + H(+). Its function is as follows. May mediate the reduction of outer membrane cytochrome b5. The sequence is that of NADH-cytochrome b5 reductase 2 (MCR1) from Mycosarcoma maydis (Corn smut fungus).